Consider the following 309-residue polypeptide: tRNA-cytidine(32) 2-sulfurtransferase (309 aa).

The PP-loop motif signature appears at 57 to 62 (SGGKDS). Cys132, Cys135, and Cys223 together coordinate [4Fe-4S] cluster.

Belongs to the TtcA family. Homodimer. Mg(2+) is required as a cofactor. [4Fe-4S] cluster serves as cofactor.

It localises to the cytoplasm. The catalysed reaction is cytidine(32) in tRNA + S-sulfanyl-L-cysteinyl-[cysteine desulfurase] + AH2 + ATP = 2-thiocytidine(32) in tRNA + L-cysteinyl-[cysteine desulfurase] + A + AMP + diphosphate + H(+). It functions in the pathway tRNA modification. Functionally, catalyzes the ATP-dependent 2-thiolation of cytidine in position 32 of tRNA, to form 2-thiocytidine (s(2)C32). The sulfur atoms are provided by the cysteine/cysteine desulfurase (IscS) system. The sequence is that of tRNA-cytidine(32) 2-sulfurtransferase from Variovorax paradoxus (strain S110).